The sequence spans 252 residues: 3-dehydroquinate dehydratase (252 aa).

Residues Ser21, Glu46 to Arg48, and Arg82 contribute to the 3-dehydroquinate site. The active-site Proton donor/acceptor is His143. Residue Lys170 is the Schiff-base intermediate with substrate of the active site. 3-dehydroquinate contacts are provided by Arg213, Ser232, and Gln236.

This sequence belongs to the type-I 3-dehydroquinase family. As to quaternary structure, homodimer.

The enzyme catalyses 3-dehydroquinate = 3-dehydroshikimate + H2O. Its pathway is metabolic intermediate biosynthesis; chorismate biosynthesis; chorismate from D-erythrose 4-phosphate and phosphoenolpyruvate: step 3/7. Its function is as follows. Involved in the third step of the chorismate pathway, which leads to the biosynthesis of aromatic amino acids. Catalyzes the cis-dehydration of 3-dehydroquinate (DHQ) and introduces the first double bond of the aromatic ring to yield 3-dehydroshikimate. The polypeptide is 3-dehydroquinate dehydratase (Escherichia coli O8 (strain IAI1)).